Here is a 24-residue protein sequence, read N- to C-terminus: Metallothionein (24 aa).

Residues Cys-3, Cys-5, Cys-8, Cys-10, Cys-17, Cys-19, and Cys-22 each contribute to the Cd(2+) site.

Belongs to the metallothionein superfamily. Type 8 family. In terms of processing, contains 4 disulfide bonds.

Metallothioneins have a high content of cysteine residues that bind various heavy metals. The chain is Metallothionein from Neonectria lugdunensis (Aquatic fungus).